A 362-amino-acid chain; its full sequence is Porin Omp2b (362 aa).

The signal sequence occupies residues 1 to 22 (MNIKSLLLGSAAALVAASGAQA).

It belongs to the alphaproteobacteria porin family. As to quaternary structure, homotrimer.

It localises to the cell outer membrane. Forms passive diffusion pores that allow small molecular weight hydrophilic materials across the outer membrane. This Brucella neotomae protein is Porin Omp2b (omp2b).